The following is a 269-amino-acid chain: Sororin (269 aa).

3 disordered regions span residues 1–39 (MSEG…IMKR), 56–110 (VNTG…PKIN), and 146–169 (SLNS…STPN). Over residues 57–66 (NTGSQSTPKV) the composition is skewed to polar residues. A KEN box motif is present at residues 85-87 (KEN). The segment covering 146–155 (SLNSSSSLYS) has biased composition (low complexity). The FGF motif motif lies at 180–182 (FGF). Residues 247–269 (LDEWAAFMNAEFEEAEKFDLTVE) form a C-terminal Sororin domain region.

The protein belongs to the sororin family. In terms of assembly, interacts with the APC/C complex. Interacts with the chromatin-bound cohesin complex; the interaction is indirect, occurs after DNA replication and requires acetylation of the cohesin component smc3. Interacts (via the FGF motif) with pds5a and pds5b; the interaction is direct and prevents the interaction of pds5a with wapl. Ubiquitinated by the APC/C complex in G1, leading to its degradation.

Its subcellular location is the nucleus. It is found in the chromosome. The protein localises to the cytoplasm. In terms of biological role, regulator of sister chromatid cohesion in mitosis stabilizing cohesin complex association with chromatin. May antagonize the action of wapl which stimulates cohesin dissociation from chromatin. Cohesion ensures that chromosome partitioning is accurate in both meiotic and mitotic cells and plays an important role in DNA repair. Required for efficient DNA double-stranded break repair. The sequence is that of Sororin (cdca5-a) from Xenopus laevis (African clawed frog).